The sequence spans 69 residues: Amphipathic peptide StCT2 (69 aa).

The first 23 residues, 1–23 (MKTQFAVLIISMILMQMLVQTEA), serve as a signal peptide directing secretion. Isoleucine 37 is subject to Isoleucine amide. Positions 41–69 (SLRNQDQFDNMFDSDLSDADLKLLDDLFD) are excised as a propeptide.

The protein belongs to the non-disulfide-bridged peptide (NDBP) superfamily. Short antimicrobial peptide (group 4) family. As to expression, expressed by the venom gland.

The protein localises to the secreted. Its subcellular location is the target cell membrane. Antimicrobial peptide that is rapidly bactericidal against Gram-positive bacteria. This is Amphipathic peptide StCT2 from Scorpiops tibetanus (Scorpion).